Consider the following 303-residue polypeptide: N-acetyl-D-glucosamine kinase (303 aa).

Residues 4–11 (GFDIGGTK) and 133–140 (GVGGGLVL) each bind ATP. The Zn(2+) site is built by histidine 157, cysteine 177, cysteine 179, and cysteine 184.

The protein belongs to the ROK (NagC/XylR) family. NagK subfamily.

It carries out the reaction N-acetyl-D-glucosamine + ATP = N-acetyl-D-glucosamine 6-phosphate + ADP + H(+). It functions in the pathway cell wall biogenesis; peptidoglycan recycling. In terms of biological role, catalyzes the phosphorylation of N-acetyl-D-glucosamine (GlcNAc) derived from cell-wall degradation, yielding GlcNAc-6-P. This is N-acetyl-D-glucosamine kinase from Salmonella arizonae (strain ATCC BAA-731 / CDC346-86 / RSK2980).